Here is an 84-residue protein sequence, read N- to C-terminus: Phosphoribosylformylglycinamidine synthase subunit PurS (84 aa).

Belongs to the PurS family. Homodimer or homotetramer. Part of the FGAM synthase complex composed of 1 PurL, 1 PurQ and 2 PurS subunits.

The protein localises to the cytoplasm. It catalyses the reaction N(2)-formyl-N(1)-(5-phospho-beta-D-ribosyl)glycinamide + L-glutamine + ATP + H2O = 2-formamido-N(1)-(5-O-phospho-beta-D-ribosyl)acetamidine + L-glutamate + ADP + phosphate + H(+). The protein operates within purine metabolism; IMP biosynthesis via de novo pathway; 5-amino-1-(5-phospho-D-ribosyl)imidazole from N(2)-formyl-N(1)-(5-phospho-D-ribosyl)glycinamide: step 1/2. Its function is as follows. Part of the phosphoribosylformylglycinamidine synthase complex involved in the purines biosynthetic pathway. Catalyzes the ATP-dependent conversion of formylglycinamide ribonucleotide (FGAR) and glutamine to yield formylglycinamidine ribonucleotide (FGAM) and glutamate. The FGAM synthase complex is composed of three subunits. PurQ produces an ammonia molecule by converting glutamine to glutamate. PurL transfers the ammonia molecule to FGAR to form FGAM in an ATP-dependent manner. PurS interacts with PurQ and PurL and is thought to assist in the transfer of the ammonia molecule from PurQ to PurL. The polypeptide is Phosphoribosylformylglycinamidine synthase subunit PurS (Bacillus subtilis (strain 168)).